Reading from the N-terminus, the 499-residue chain is Uridine-cytidine kinase A (499 aa).

A disordered region spans residues 1 to 44; that stretch reads MSDNSTTKVTTNDSPSLTTTTSTTTAPTTTTTTTTTPTHNHDTT. Positions 10 to 38 are enriched in low complexity; that stretch reads TTNDSPSLTTTTSTTTAPTTTTTTTTTPT. 78-85 is an ATP binding site; it reads GGSASGKT.

This sequence belongs to the uridine kinase family.

The enzyme catalyses uridine + ATP = UMP + ADP + H(+). It catalyses the reaction cytidine + ATP = CMP + ADP + H(+). It participates in pyrimidine metabolism; CTP biosynthesis via salvage pathway; CTP from cytidine: step 1/3. It functions in the pathway pyrimidine metabolism; UMP biosynthesis via salvage pathway; UMP from uridine: step 1/1. Its function is as follows. Catalyzes the conversion of uridine into uridine monophosphate and cytidine into cytidine monophosphate in the pyrimidine salvage pathway. This chain is Uridine-cytidine kinase A (udkA), found in Dictyostelium discoideum (Social amoeba).